The chain runs to 102 residues: Large ribosomal subunit protein bL21 (102 aa).

It belongs to the bacterial ribosomal protein bL21 family. Part of the 50S ribosomal subunit. Contacts protein L20.

This protein binds to 23S rRNA in the presence of protein L20. In Bacillus velezensis (strain DSM 23117 / BGSC 10A6 / LMG 26770 / FZB42) (Bacillus amyloliquefaciens subsp. plantarum), this protein is Large ribosomal subunit protein bL21.